Here is a 209-residue protein sequence, read N- to C-terminus: UPF0174 protein jhp_1493 (209 aa).

The protein belongs to the UPF0174 family.

In Helicobacter pylori (strain J99 / ATCC 700824) (Campylobacter pylori J99), this protein is UPF0174 protein jhp_1493.